Here is a 415-residue protein sequence, read N- to C-terminus: NPL4-like protein (415 aa).

The MPN domain maps to 130–279 (AASFDRDSAN…FEAFQMSEIC (150 aa)).

This sequence belongs to the NPL4 family.

The protein resides in the endoplasmic reticulum. It functions in the pathway protein degradation; proteasomal ubiquitin-dependent pathway. In terms of biological role, may be part of a complex that binds ubiquitinated proteins and that is necessary for the export of misfolded proteins from the ER to the cytoplasm, where they are degraded by the proteasome. In Oryza sativa subsp. japonica (Rice), this protein is NPL4-like protein.